A 201-amino-acid polypeptide reads, in one-letter code: Snake venom metalloproteinase trimerelysin-2 (201 aa).

Glutamine 1 carries the pyrrolidone carboxylic acid modification. A Peptidase M12B domain is found at arginine 6 to proline 201. The N-linked (GlcNAc...) asparagine glycan is linked to asparagine 72. Intrachain disulfides connect cysteine 117–cysteine 196, cysteine 158–cysteine 180, and cysteine 160–cysteine 163. Histidine 142 is a binding site for Zn(2+). The active site involves glutamate 143. Zn(2+) is bound by residues histidine 146 and histidine 152.

This sequence belongs to the venom metalloproteinase (M12B) family. P-I subfamily. In terms of assembly, monomer. Zn(2+) is required as a cofactor. Expressed by the venom gland.

The protein resides in the secreted. It catalyses the reaction Cleavage of 3-Asn-|-Gln-4, 10-His-|-Leu-11 and 14-Ala-|-Leu-15 in the insulin B chain, and the bond Z-Gly-Pro-|-Leu-Gly-Pro in a small molecule substrate of microbial collagenase.. Major venom non-hemorrhagic metalloproteinase. The polypeptide is Snake venom metalloproteinase trimerelysin-2 (Protobothrops flavoviridis (Habu)).